Consider the following 228-residue polypeptide: Aquaporin Z (228 aa).

A run of 2 helical transmembrane segments spans residues 1 to 21 (MLNKLSAEFFGTFWLVFGGCG) and 23 to 43 (AILAAAFPELGIGFLGVALAF). Residues 63–65 (NPA) carry the NPA 1 motif. 3 consecutive transmembrane segments (helical) span residues 82–102 (IPYWVAQVLGAIAAAAILYVI), 129–149 (MMAGLLIEIILTAFFIIIILG), and 154–174 (LAPAGFAPIAIGFGLTLIHLV). Positions 184–186 (NPA) match the NPA 2 motif. A helical membrane pass occupies residues 205–225 (LFWVAPLVGAVIGAIIWKGLL).

It belongs to the MIP/aquaporin (TC 1.A.8) family. In terms of assembly, homotetramer.

The protein localises to the cell inner membrane. The enzyme catalyses H2O(in) = H2O(out). In terms of biological role, channel that permits osmotically driven movement of water in both directions. It is involved in the osmoregulation and in the maintenance of cell turgor during volume expansion in rapidly growing cells. It mediates rapid entry or exit of water in response to abrupt changes in osmolarity. This chain is Aquaporin Z, found in Brucella melitensis biotype 1 (strain ATCC 23456 / CCUG 17765 / NCTC 10094 / 16M).